A 486-amino-acid polypeptide reads, in one-letter code: Aspartyl/glutamyl-tRNA(Asn/Gln) amidotransferase subunit B (486 aa).

This sequence belongs to the GatB/GatE family. GatB subfamily. Heterotrimer of A, B and C subunits.

The catalysed reaction is L-glutamyl-tRNA(Gln) + L-glutamine + ATP + H2O = L-glutaminyl-tRNA(Gln) + L-glutamate + ADP + phosphate + H(+). It carries out the reaction L-aspartyl-tRNA(Asn) + L-glutamine + ATP + H2O = L-asparaginyl-tRNA(Asn) + L-glutamate + ADP + phosphate + 2 H(+). Allows the formation of correctly charged Asn-tRNA(Asn) or Gln-tRNA(Gln) through the transamidation of misacylated Asp-tRNA(Asn) or Glu-tRNA(Gln) in organisms which lack either or both of asparaginyl-tRNA or glutaminyl-tRNA synthetases. The reaction takes place in the presence of glutamine and ATP through an activated phospho-Asp-tRNA(Asn) or phospho-Glu-tRNA(Gln). The polypeptide is Aspartyl/glutamyl-tRNA(Asn/Gln) amidotransferase subunit B (Leptospira borgpetersenii serovar Hardjo-bovis (strain JB197)).